Here is a 198-residue protein sequence, read N- to C-terminus: Peroxiredoxin-2F, mitochondrial (198 aa).

Residues 1 to 27 (MASALLRKATVGGSAAAAAARWASRGL) constitute a mitochondrion transit peptide. Residues 34–198 (SDIVSAAPGV…SGAEVILDQI (165 aa)) enclose the Thioredoxin domain. Residue Cys86 is the Cysteine sulfenic acid (-SOH) intermediate of the active site.

It belongs to the peroxiredoxin family. Prx5 subfamily. As to quaternary structure, monomer.

Its subcellular location is the mitochondrion matrix. The enzyme catalyses [glutaredoxin]-dithiol + a hydroperoxide = [glutaredoxin]-disulfide + an alcohol + H2O. Thiol-specific peroxidase that catalyzes the reduction of hydrogen peroxide and organic hydroperoxides to water and alcohols, respectively. Plays a role in cell protection against oxidative stress by detoxifying peroxides. Reduces preferentially hydrogen peroxide rather than alkyl peroxides. May be involved in mitochondrial redox homeostasis. This Oryza sativa subsp. japonica (Rice) protein is Peroxiredoxin-2F, mitochondrial (PRXIIF).